Reading from the N-terminus, the 1312-residue chain is Rho GTPase-activating protein gacG (1312 aa).

Disordered regions lie at residues valine 52–glutamine 74, serine 111–aspartate 158, isoleucine 314–phenylalanine 519, asparagine 762–glycine 831, asparagine 1185–valine 1230, and threonine 1282–glutamate 1312. Composition is skewed to low complexity over residues glutamate 53–asparagine 67 and serine 111–arginine 146. A compositionally biased stretch (polar residues) spans asparagine 147–aspartate 158. Low complexity-rich tracts occupy residues threonine 328–serine 355, histidine 373–serine 397, and leucine 414–asparagine 436. The span at glutamate 437–arginine 449 shows a compositional bias: polar residues. The segment covering serine 479–glutamine 507 has biased composition (low complexity). Composition is skewed to polar residues over residues histidine 508–asparagine 518 and serine 763–alanine 776. Residues asparagine 792–asparagine 816 show a composition bias toward low complexity. One can recognise a Rho-GAP domain in the interval serine 1030–asparagine 1212. Residues histidine 1196 to arginine 1210 are compositionally biased toward basic residues. Low complexity-rich tracts occupy residues asparagine 1213–serine 1222 and threonine 1282–serine 1305.

Its subcellular location is the cytoplasm. In terms of biological role, rho GTPase-activating protein involved in the signal transduction pathway. The polypeptide is Rho GTPase-activating protein gacG (gacG) (Dictyostelium discoideum (Social amoeba)).